Here is a 204-residue protein sequence, read N- to C-terminus: MSREQLSVEIIEAGRFLYGRGWSPATSSNYSARLSATEALLTVSGKHKGQLGPDDVLATDMAGNSLEPGKKPSAETLLHTQLYSSRPQVGAVLHTHSVNATVLSRLTAADHLVFEDYELQKAFHGVVTHQSQVVVPIFDNDQDIARLAAKVQPWLDAHPECAGYLIRGHGLYTWGAKMSDALRQIEAFEFLFECELKMRAVLNR.

The Zn(2+) site is built by H94 and H96.

This sequence belongs to the aldolase class II family. MtnB subfamily. Zn(2+) serves as cofactor.

It carries out the reaction 5-(methylsulfanyl)-D-ribulose 1-phosphate = 5-methylsulfanyl-2,3-dioxopentyl phosphate + H2O. Its pathway is amino-acid biosynthesis; L-methionine biosynthesis via salvage pathway; L-methionine from S-methyl-5-thio-alpha-D-ribose 1-phosphate: step 2/6. In terms of biological role, catalyzes the dehydration of methylthioribulose-1-phosphate (MTRu-1-P) into 2,3-diketo-5-methylthiopentyl-1-phosphate (DK-MTP-1-P). This is Methylthioribulose-1-phosphate dehydratase from Pseudomonas savastanoi pv. phaseolicola (strain 1448A / Race 6) (Pseudomonas syringae pv. phaseolicola (strain 1448A / Race 6)).